The following is a 265-amino-acid chain: Putative hydro-lyase PST_2764 (265 aa).

It belongs to the D-glutamate cyclase family.

The polypeptide is Putative hydro-lyase PST_2764 (Stutzerimonas stutzeri (strain A1501) (Pseudomonas stutzeri)).